A 190-amino-acid chain; its full sequence is GTP cyclohydrolase 1 (190 aa).

Zn(2+) contacts are provided by C75, H78, and C146.

It belongs to the GTP cyclohydrolase I family. Homomer.

The enzyme catalyses GTP + H2O = 7,8-dihydroneopterin 3'-triphosphate + formate + H(+). It participates in cofactor biosynthesis; 7,8-dihydroneopterin triphosphate biosynthesis; 7,8-dihydroneopterin triphosphate from GTP: step 1/1. The polypeptide is GTP cyclohydrolase 1 (Campylobacter jejuni subsp. jejuni serotype O:6 (strain 81116 / NCTC 11828)).